Consider the following 123-residue polypeptide: Probable non-functional immunoglobulin lambda variable 11-55 (123 aa).

The first 19 residues, 1–19 (MALTPLLLLLLSHCTGSLS), serve as a signal peptide directing secretion. Residues 20–44 (RPVLTQPPSLSASPGATARLPCTLS) form a framework-1 region. One can recognise an Ig-like domain in the interval 21-123 (PVLTQPPSLS…YCQVYESSAN (103 aa)). Cysteines 41 and 115 form a disulfide. Residues 45–53 (SDLSVGGKN) are complementarity-determining-1. Positions 54 to 70 (MFWYQQKLGSSPRLFLY) are framework-2. Positions 71–77 (HYSDSDK) are complementarity-determining-2. Residues 78-115 (QLGPGVPSRVSGSKETSSNTAFLLISGLQPEDEADYYC) form a framework-3 region. The interval 116-123 (QVYESSAN) is complementarity-determining-3.

Immunoglobulins are composed of two identical heavy chains and two identical light chains; disulfide-linked.

It localises to the secreted. The protein resides in the cell membrane. Its function is as follows. Probable non-functional open reading frame (ORF) of V region of the variable domain of immunoglobulin light chains. Non-functional ORF generally cannot participate in the synthesis of a productive immunoglobulin chain due to altered V-(D)-J or switch recombination and/or splicing site (at mRNA level) and/or conserved amino acid change (protein level). Immunoglobulins, also known as antibodies, are membrane-bound or secreted glycoproteins produced by B lymphocytes. In the recognition phase of humoral immunity, the membrane-bound immunoglobulins serve as receptors which, upon binding of a specific antigen, trigger the clonal expansion and differentiation of B lymphocytes into immunoglobulins-secreting plasma cells. Secreted immunoglobulins mediate the effector phase of humoral immunity, which results in the elimination of bound antigens. The antigen binding site is formed by the variable domain of one heavy chain, together with that of its associated light chain. Thus, each immunoglobulin has two antigen binding sites with remarkable affinity for a particular antigen. The variable domains are assembled by a process called V-(D)-J rearrangement and can then be subjected to somatic hypermutations which, after exposure to antigen and selection, allow affinity maturation for a particular antigen. The chain is Probable non-functional immunoglobulin lambda variable 11-55 from Homo sapiens (Human).